We begin with the raw amino-acid sequence, 36 residues long: Potassium channel toxin alpha-KTx 6.14 (36 aa).

Cystine bridges form between Cys-5/Cys-25, Cys-11/Cys-30, Cys-15/Cys-32, and Cys-20/Cys-35.

As to expression, expressed by the venom gland.

It localises to the secreted. In terms of biological role, blocks Shaker B channels expressed in Sf9 cells, with a dissociation constant of 52 nM. This chain is Potassium channel toxin alpha-KTx 6.14, found in Hoffmannihadrurus gertschi (Scorpion).